The sequence spans 245 residues: Ribonuclease PH (245 aa).

Phosphate contacts are provided by residues R93 and 131–133; that span reads GTR.

It belongs to the RNase PH family. In terms of assembly, homohexameric ring arranged as a trimer of dimers.

The enzyme catalyses tRNA(n+1) + phosphate = tRNA(n) + a ribonucleoside 5'-diphosphate. Functionally, phosphorolytic 3'-5' exoribonuclease that plays an important role in tRNA 3'-end maturation. Removes nucleotide residues following the 3'-CCA terminus of tRNAs; can also add nucleotides to the ends of RNA molecules by using nucleoside diphosphates as substrates, but this may not be physiologically important. Probably plays a role in initiation of 16S rRNA degradation (leading to ribosome degradation) during starvation. This Corynebacterium glutamicum (strain ATCC 13032 / DSM 20300 / JCM 1318 / BCRC 11384 / CCUG 27702 / LMG 3730 / NBRC 12168 / NCIMB 10025 / NRRL B-2784 / 534) protein is Ribonuclease PH.